A 225-amino-acid chain; its full sequence is Insulin-induced gene 2 protein (225 aa).

Residues 1 to 28 lie on the Cytoplasmic side of the membrane; it reads MAEGETESPRPKKRGPYISSVTSQSVNV. Residues 29-51 form a helical membrane-spanning segment; sequence VIRGVVLFFIGVFLALVLNLLQI. The Lumenal portion of the chain corresponds to 52–70; the sequence is QRNVTLFPPDVITSIFSSA. A helical membrane pass occupies residues 71 to 88; the sequence is WWVPPCCGTASAVIGLLY. Topologically, residues 89–103 are cytoplasmic; sequence PCIDRHLGEPHKFKR. The chain crosses the membrane as a helical span at residues 104–126; it reads EWSSVMRCVAVFVGINHASAKVD. The Lumenal segment spans residues 127 to 129; it reads FDN. Residues 130–148 traverse the membrane as a helical segment; that stretch reads NFQFSLTLAALSVGLWWTF. Topologically, residues 149–153 are cytoplasmic; that stretch reads DRSRS. Serine 151 is modified (phosphoserine). The helical transmembrane segment at 154 to 175 threads the bilayer; that stretch reads GFGLGVGIAFLATVVTQLLVYN. Residues 176-189 lie on the Lumenal side of the membrane; the sequence is GVYQYTSPDFLYVR. The chain crosses the membrane as a helical span at residues 190-207; it reads SWLPCIFFAGGITMGNIG. Topologically, residues 208 to 225 are cytoplasmic; the sequence is RQLAMYECKVIAEKSHQE. Residue cysteine 215 is modified to Cysteine sulfenic acid (-SOH); alternate. Cysteine 215 is covalently cross-linked (Glycyl cysteine thioester (Cys-Gly) (interchain with G-Cter in ubiquitin); alternate). The KxHxx motif lies at 219 to 225; sequence AEKSHQE.

The protein belongs to the INSIG family. In terms of assembly, interacts with SCAP; interaction is direct and only takes place in the presence of sterols; it prevents interaction between SCAP and the coat protein complex II (COPII). Associates with the SCAP-SREBP complex (composed of SCAP and SREBF1/SREBP1 or SREBF2/SREBP2); association is mediated via its interaction with SCAP and only takes place in the presence of sterols. Interacts with RNF139. Interacts with RNF145. Post-translationally, phosphorylation at Ser-151 by PCK1 reduces binding to oxysterol, disrupting the interaction between INSIG2 and SCAP, thereby promoting nuclear translocation of SREBP proteins (SREBF1/SREBP1 or SREBF2/SREBP2) and subsequent transcription of downstream lipogenesis-related genes. Polyubiquitinated by AMFR/gp78 at Cys-215 in some tissues such as adipose tissues, undifferentiated myoblasts and liver, leading to its degradation. In differentiated myotubes, Cys-215 oxidation prevents ubiquitination at the same site, resulting in protein stabilization. In terms of processing, oxidized at Cys-215 in differentiated myotubes, preventing ubiquitination at the same site, and resulting in protein stabilization.

It is found in the endoplasmic reticulum membrane. Functionally, oxysterol-binding protein that mediates feedback control of cholesterol synthesis by controlling both endoplasmic reticulum to Golgi transport of SCAP and degradation of HMGCR. Acts as a negative regulator of cholesterol biosynthesis by mediating the retention of the SCAP-SREBP complex in the endoplasmic reticulum, thereby blocking the processing of sterol regulatory element-binding proteins (SREBPs) SREBF1/SREBP1 and SREBF2/SREBP2. Binds oxysterol, including 22-hydroxycholesterol, 24-hydroxycholesterol, 25-hydroxycholesterol and 27-hydroxycholesterol, regulating interaction with SCAP and retention of the SCAP-SREBP complex in the endoplasmic reticulum. In presence of oxysterol, interacts with SCAP, retaining the SCAP-SREBP complex in the endoplasmic reticulum, thereby preventing SCAP from escorting SREBF1/SREBP1 and SREBF2/SREBP2 to the Golgi. Sterol deprivation or phosphorylation by PCK1 reduce oxysterol-binding, disrupting the interaction between INSIG2 and SCAP, thereby promoting Golgi transport of the SCAP-SREBP complex, followed by processing and nuclear translocation of SREBF1/SREBP1 and SREBF2/SREBP2. Also regulates cholesterol synthesis by regulating degradation of HMGCR: initiates the sterol-mediated ubiquitin-mediated endoplasmic reticulum-associated degradation (ERAD) of HMGCR via recruitment of the reductase to the ubiquitin ligase RNF139. This is Insulin-induced gene 2 protein from Rattus norvegicus (Rat).